A 127-amino-acid chain; its full sequence is Mating pheromone 4 (127 aa).

An N-terminal signal peptide occupies residues 1 to 16 (MKAIFIILAILMVTQA). The propeptide occupies 17–42 (FKMTSKVKSMNMSRNMSKNTSTLGTK).

It localises to the secreted. Functionally, mating ciliate pheromones (or gamones) are diffusible extracellular communication signals that distinguish different intraspecific classes of cells commonly referred to as 'mating types'. They prepare the latter for conjugation by changing their cell surface properties. The chain is Mating pheromone 4 (PHR4) from Euplotoides octocarinatus (Freshwater ciliate).